Reading from the N-terminus, the 278-residue chain is Biotin synthase (278 aa).

The Radical SAM core domain maps to 1 to 227 (MQIMLCAISN…QSVVMVAGGR (227 aa)). Residues Cys-16, Cys-20, and Cys-23 each contribute to the [4Fe-4S] cluster site. Residues Cys-60, Cys-95, and Cys-153 each contribute to the [2Fe-2S] cluster site.

The protein belongs to the radical SAM superfamily. Biotin synthase family. In terms of assembly, homodimer. [4Fe-4S] cluster serves as cofactor. It depends on [2Fe-2S] cluster as a cofactor.

The enzyme catalyses (4R,5S)-dethiobiotin + (sulfur carrier)-SH + 2 reduced [2Fe-2S]-[ferredoxin] + 2 S-adenosyl-L-methionine = (sulfur carrier)-H + biotin + 2 5'-deoxyadenosine + 2 L-methionine + 2 oxidized [2Fe-2S]-[ferredoxin]. Its pathway is cofactor biosynthesis; biotin biosynthesis; biotin from 7,8-diaminononanoate: step 2/2. In terms of biological role, catalyzes the conversion of dethiobiotin (DTB) to biotin by the insertion of a sulfur atom into dethiobiotin via a radical-based mechanism. In Campylobacter jejuni subsp. doylei (strain ATCC BAA-1458 / RM4099 / 269.97), this protein is Biotin synthase.